An 809-amino-acid chain; its full sequence is Ecotropic viral integration site 5 protein (809 aa).

Residues 1–483 form an interaction with alpha-tubulin, gamma-tubulin, BIRC5 and FBXO5 region; sequence MVTTKMTAAF…EAESQCALKE (483 aa). Disordered regions lie at residues 49–80 and 99–123; these read VASPSASLHTTSSSTTLSTPTQSPSSPSKLSP and DSKSLRSVNGSRRNSGSSLVSSSSA. Low complexity predominate over residues 51-78; it reads SPSASLHTTSSSTTLSTPTQSPSSPSKL. Residues S102 and S113 each carry the phosphoserine modification. The span at 103–123 shows a compositional bias: low complexity; it reads LRSVNGSRRNSGSSLVSSSSA. Residues 128 to 693 are dimerization; sequence SHLEEDSWIL…LNRSDSNQYI (566 aa). Residues 163–348 form the Rab-GAP TBC domain; the sequence is GIPHHFRAIV…RIFDIFMSEG (186 aa). The segment at 377–809 is targeting to the centrosomes; the sequence is QHFQKVIPHQ…PQRESYSTTV (433 aa). Positions 406–717 form a coiled coil; sequence KKMKKLEKEY…RCLKGQRDFS (312 aa). Residues 487–809 are interaction with AURKB and INCENP; sequence KVLDIEKKNN…PQRESYSTTV (323 aa). Phosphoserine occurs at positions 497, 689, 776, and 778. The tract at residues 760 to 809 is disordered; sequence HRKSGPMSLNPALADGSESEAEDGMLGPQESDPEAPQKQPPQRESYSTTV. Over residues 799-809 the composition is skewed to polar residues; sequence PPQRESYSTTV.

In terms of assembly, dimeric and monomeric. Interacts with alpha- and gamma-tubulin. Interacts with FBXO5. Interacts with the chromosome passenger complex (CPC) which is at least composed of AURKB/aurora-B, BIRC5/survivin, CDCA8/borealin and INCENP. Post-translationally, probably phosphorylated by PLK1; may be required for degradation during mitosis. Ubiquitinated. Degradation during prophase is ubiquitin-dependent. Widely expressed.

The protein resides in the nucleus. It is found in the cytoplasm. It localises to the cytoskeleton. Its subcellular location is the microtubule organizing center. The protein localises to the centrosome. The protein resides in the spindle. In terms of biological role, functions as a regulator of cell cycle progression by stabilizing the FBXO5 protein and promoting cyclin-A accumulation during interphase. May play a role in cytokinesis. The sequence is that of Ecotropic viral integration site 5 protein (Evi5) from Mus musculus (Mouse).